We begin with the raw amino-acid sequence, 85 residues long: ATP synthase subunit 9, mitochondrial (85 aa).

The next 2 membrane-spanning stretches (helical) occupy residues Ile19–Phe39 and Ile61–Ile81.

The protein belongs to the ATPase C chain family. As to quaternary structure, F-type ATPases have 2 components, CF(1) - the catalytic core - and CF(0) - the membrane proton channel. CF(1) has five subunits: alpha(3), beta(3), gamma(1), delta(1), epsilon(1). CF(0) has three main subunits: a, b and c.

It localises to the mitochondrion membrane. This protein is one of the chains of the nonenzymatic membrane component (F0) of mitochondrial ATPase. This chain is ATP synthase subunit 9, mitochondrial (ATP9), found in Arabidopsis thaliana (Mouse-ear cress).